Consider the following 480-residue polypeptide: Coronin-2B (480 aa).

WD repeat units lie at residues 29–77 (HCFD…GRIE), 78–127 (PNYP…RNMT), 128–170 (EALL…LDVG), 171–212 (EPVK…PRSG), 213–259 (RVLQ…EDLS), 260–305 (MPLI…TEKP), and 306–345 (YLSYLMEFRSPAPQKGLGVMPKHGLDVSACEVFRFYKLVT). Positions 436 to 479 (NELLRMFFRQQDEIRRLKEELAQKDIRIRQLQLELKNLRNSPKN) form a coiled coil.

This sequence belongs to the WD repeat coronin family. In terms of assembly, binds to F-actin and to vinculin. Expressed predominantly in brain.

It is found in the cytoplasm. The protein resides in the cytoskeleton. Functionally, may play a role in the reorganization of neuronal actin structure. The sequence is that of Coronin-2B (CORO2B) from Homo sapiens (Human).